Consider the following 257-residue polypeptide: Hydroxyacylglutathione hydrolase (257 aa).

Residues His-55, His-57, Asp-59, His-60, His-112, Asp-129, and His-167 each contribute to the Zn(2+) site.

This sequence belongs to the metallo-beta-lactamase superfamily. Glyoxalase II family. In terms of assembly, monomer. The cofactor is Zn(2+).

It catalyses the reaction an S-(2-hydroxyacyl)glutathione + H2O = a 2-hydroxy carboxylate + glutathione + H(+). Its pathway is secondary metabolite metabolism; methylglyoxal degradation; (R)-lactate from methylglyoxal: step 2/2. In terms of biological role, thiolesterase that catalyzes the hydrolysis of S-D-lactoyl-glutathione to form glutathione and D-lactic acid. This is Hydroxyacylglutathione hydrolase from Pseudoalteromonas translucida (strain TAC 125).